The following is a 137-amino-acid chain: Nucleoside diphosphate kinase (137 aa).

6 residues coordinate ATP: Lys9, Phe57, Arg85, Thr91, Arg102, and Asn112. The active-site Pros-phosphohistidine intermediate is His115.

This sequence belongs to the NDK family. As to quaternary structure, homotetramer. Requires Mg(2+) as cofactor.

The protein resides in the cytoplasm. It carries out the reaction a 2'-deoxyribonucleoside 5'-diphosphate + ATP = a 2'-deoxyribonucleoside 5'-triphosphate + ADP. The catalysed reaction is a ribonucleoside 5'-diphosphate + ATP = a ribonucleoside 5'-triphosphate + ADP. Functionally, major role in the synthesis of nucleoside triphosphates other than ATP. The ATP gamma phosphate is transferred to the NDP beta phosphate via a ping-pong mechanism, using a phosphorylated active-site intermediate. The sequence is that of Nucleoside diphosphate kinase from Desulfotalea psychrophila (strain LSv54 / DSM 12343).